Here is a 440-residue protein sequence, read N- to C-terminus: Transposon Ty1-JR2 Gag polyprotein (440 aa).

The span at 1-16 shows a compositional bias: low complexity; the sequence is MESQQLSQHSHISHGS. 3 disordered regions span residues 1–93, 126–173, and 352–440; these read MESQ…MMTQ, PQSQ…RPPP, and GSRN…PETY. 3 stretches are compositionally biased toward polar residues: residues 48-60, 71-93, and 127-152; these read TKAN…TPAS, SPQT…MMTQ, and QSQF…GNTF. A compositionally biased stretch (low complexity) spans 153 to 165; it reads TDSSSADSDMTST. Residues 299-401 are RNA-binding; it reads NNGIHINNKV…NSKSKTARAH (103 aa). A compositionally biased stretch (low complexity) spans 402–418; that stretch reads NVSTSNNSPSTDNDSIS. At Ser-416 the chain carries Phosphoserine. Residues 419–428 are compositionally biased toward polar residues; it reads KSTTEPIQLN. The segment covering 429 to 440 has biased composition (basic and acidic residues); that stretch reads NKHDLHLRPETY.

As to quaternary structure, homotrimer.

It is found in the cytoplasm. In terms of biological role, capsid protein (CA) is the structural component of the virus-like particle (VLP), forming the shell that encapsulates the retrotransposons dimeric RNA genome. The particles are assembled from trimer-clustered units and there are holes in the capsid shells that allow for the diffusion of macromolecules. CA also has nucleocapsid-like chaperone activity, promoting primer tRNA(i)-Met annealing to the multipartite primer-binding site (PBS), dimerization of Ty1 RNA and initiation of reverse transcription. The polypeptide is Transposon Ty1-JR2 Gag polyprotein (TY1A-JR2) (Saccharomyces cerevisiae (strain ATCC 204508 / S288c) (Baker's yeast)).